Reading from the N-terminus, the 55-residue chain is Large ribosomal subunit protein bL33 (55 aa).

The protein belongs to the bacterial ribosomal protein bL33 family.

This Acidothermus cellulolyticus (strain ATCC 43068 / DSM 8971 / 11B) protein is Large ribosomal subunit protein bL33.